The following is a 219-amino-acid chain: 2-C-methyl-D-erythritol 4-phosphate cytidylyltransferase (219 aa).

It belongs to the IspD/TarI cytidylyltransferase family. IspD subfamily.

It catalyses the reaction 2-C-methyl-D-erythritol 4-phosphate + CTP + H(+) = 4-CDP-2-C-methyl-D-erythritol + diphosphate. The protein operates within isoprenoid biosynthesis; isopentenyl diphosphate biosynthesis via DXP pathway; isopentenyl diphosphate from 1-deoxy-D-xylulose 5-phosphate: step 2/6. Its function is as follows. Catalyzes the formation of 4-diphosphocytidyl-2-C-methyl-D-erythritol from CTP and 2-C-methyl-D-erythritol 4-phosphate (MEP). In Phocaeicola vulgatus (strain ATCC 8482 / DSM 1447 / JCM 5826 / CCUG 4940 / NBRC 14291 / NCTC 11154) (Bacteroides vulgatus), this protein is 2-C-methyl-D-erythritol 4-phosphate cytidylyltransferase.